Reading from the N-terminus, the 690-residue chain is Eukaryotic translation initiation factor 3 subunit B (690 aa).

Residues 1–11 (MAKKKSEEHSG) are compositionally biased toward basic and acidic residues. The disordered stretch occupies residues 1–36 (MAKKKSEEHSGADANDSDYQEEPNFEDPPGFVDNIS). Over residues 15–25 (NDSDYQEEPNF) the composition is skewed to acidic residues. Positions 57–141 (SVVVVDNIPK…HTFAVNLFTD (85 aa)) constitute an RRM domain. 5 WD repeats span residues 207-246 (TRERFTDTFVKWSPLGTYVVTFHKPGVAIWGGSSFQKIQK), 293-331 (DGMSVLSMFRWSHDDKFVARMGENSIHIYETPSFFLLDL), 334-369 (IKIPGIRGFSWSPTDNVIAYWVEEQNQIPARVTLME), 442-484 (EIRE…KPSL), and 530-575 (PDHF…IKRT). Positions 595 to 645 (EEKQKEIKKNLKKYYAAFEQKDRLRLTRASKELLEKRSQLRETFMEYRNKR) form a coiled coil.

It belongs to the eIF-3 subunit B family. As to quaternary structure, component of the eukaryotic translation initiation factor 3 (eIF-3) complex. The eIF-3 complex interacts with pix. Interacts with mxt.

Its subcellular location is the cytoplasm. In terms of biological role, RNA-binding component of the eukaryotic translation initiation factor 3 (eIF-3) complex, which is involved in protein synthesis of a specialized repertoire of mRNAs and, together with other initiation factors, stimulates binding of mRNA and methionyl-tRNAi to the 40S ribosome. The eIF-3 complex specifically targets and initiates translation of a subset of mRNAs involved in cell proliferation. This Drosophila erecta (Fruit fly) protein is Eukaryotic translation initiation factor 3 subunit B.